A 306-amino-acid chain; its full sequence is Porphobilinogen deaminase (306 aa).

An S-(dipyrrolylmethanemethyl)cysteine modification is found at C240.

This sequence belongs to the HMBS family. In terms of assembly, monomer. It depends on dipyrromethane as a cofactor.

It carries out the reaction 4 porphobilinogen + H2O = hydroxymethylbilane + 4 NH4(+). Its pathway is porphyrin-containing compound metabolism; protoporphyrin-IX biosynthesis; coproporphyrinogen-III from 5-aminolevulinate: step 2/4. Its function is as follows. Tetrapolymerization of the monopyrrole PBG into the hydroxymethylbilane pre-uroporphyrinogen in several discrete steps. This chain is Porphobilinogen deaminase, found in Thiobacillus denitrificans (strain ATCC 25259 / T1).